Here is a 290-residue protein sequence, read N- to C-terminus: 4-hydroxybenzoate octaprenyltransferase (290 aa).

8 consecutive transmembrane segments (helical) span residues 23–43 (IGAL…TPGV), 46–66 (LWIL…GCVV), 99–119 (LFVV…TMTI), 141–161 (LPQV…FAAV), 163–183 (ESVP…AVAY), 213–233 (LIIG…GELN), 234–254 (GLGW…VYQQ), and 268–288 (AFMN…MSYW).

This sequence belongs to the UbiA prenyltransferase family. The cofactor is Mg(2+).

It localises to the cell inner membrane. The catalysed reaction is all-trans-octaprenyl diphosphate + 4-hydroxybenzoate = 4-hydroxy-3-(all-trans-octaprenyl)benzoate + diphosphate. Its pathway is cofactor biosynthesis; ubiquinone biosynthesis. Catalyzes the prenylation of para-hydroxybenzoate (PHB) with an all-trans polyprenyl group. Mediates the second step in the final reaction sequence of ubiquinone-8 (UQ-8) biosynthesis, which is the condensation of the polyisoprenoid side chain with PHB, generating the first membrane-bound Q intermediate 3-octaprenyl-4-hydroxybenzoate. This is 4-hydroxybenzoate octaprenyltransferase from Escherichia coli O6:K15:H31 (strain 536 / UPEC).